The chain runs to 420 residues: MPVRVSEFSWQQTPATIFLSLPLRGVCVRDADVFCGESYLKVNFPPFLFELFLYAPIDDGKSKAKIGNDTILFTLYKKEPVLWDSLSVPGVDKEMMQRIREKSILQAQEKAKEATEAKAVAKREDQRYALGEMMKIEEEERKKIEDMKENERKKATSELEAWKECQKKADGQKRVQRKEKPLEGKQAEETKALKPRGLPRKAPPTRLPTRGRNWENIFPEKLKEDRVPAPRSAGSIQISFTPRVFPTALRESQVAEEEEWLHKQAEARRAMSTDLPEFFDLKEEERNPDWLKDKGNKLFATENYLAAVDAYNLAIRLNCKIPLLYLNRAACHLKLKNLHKAIEDSSKALELLTPPVADNANARMKAHVRRGTAFCQLELYVEGLQDYEAALKIDPANTVVQNDAEKIRNIIQGTALKSRD.

The 85-residue stretch at 3 to 87 folds into the CS domain; that stretch reads VRVSEFSWQQ…KEPVLWDSLS (85 aa). Residues 7–103 are mediates interaction with ESR1 and STUB1; the sequence is EFSWQQTPAT…EMMQRIREKS (97 aa). The span at 164 to 192 shows a compositional bias: basic and acidic residues; that stretch reads ECQKKADGQKRVQRKEKPLEGKQAEETKA. A disordered region spans residues 164–212; it reads ECQKKADGQKRVQRKEKPLEGKQAEETKALKPRGLPRKAPPTRLPTRGR. 3 TPR repeats span residues 288 to 321, 322 to 355, and 364 to 397; these read PDWL…NCKI, PLLY…LTPP, and MKAH…DPAN.

In terms of assembly, interacts with ZMYND10. Interacts with ESR1 and ESR2. Interacts with STUB1. Interacts with DNAAF2. Interacts with CCT3, CCT4, CCT5 and CCT8. Interacts with DNAAF6/PIH1D3.

Its subcellular location is the nucleus. It is found in the cytoplasm. It localises to the dynein axonemal particle. The protein localises to the cell projection. The protein resides in the neuron projection. Involved in neuronal migration during development of the cerebral neocortex. May regulate the stability and proteasomal degradation of the estrogen receptors that play an important role in neuronal differentiation, survival and plasticity. Axonemal dynein assembly factor required for ciliary motility. The sequence is that of Dynein axonemal assembly factor 4 from Mus musculus (Mouse).